A 486-amino-acid chain; its full sequence is Aspartyl/glutamyl-tRNA(Asn/Gln) amidotransferase subunit B (486 aa).

Belongs to the GatB/GatE family. GatB subfamily. In terms of assembly, heterotrimer of A, B and C subunits.

The enzyme catalyses L-glutamyl-tRNA(Gln) + L-glutamine + ATP + H2O = L-glutaminyl-tRNA(Gln) + L-glutamate + ADP + phosphate + H(+). It catalyses the reaction L-aspartyl-tRNA(Asn) + L-glutamine + ATP + H2O = L-asparaginyl-tRNA(Asn) + L-glutamate + ADP + phosphate + 2 H(+). Its function is as follows. Allows the formation of correctly charged Asn-tRNA(Asn) or Gln-tRNA(Gln) through the transamidation of misacylated Asp-tRNA(Asn) or Glu-tRNA(Gln) in organisms which lack either or both of asparaginyl-tRNA or glutaminyl-tRNA synthetases. The reaction takes place in the presence of glutamine and ATP through an activated phospho-Asp-tRNA(Asn) or phospho-Glu-tRNA(Gln). In Herminiimonas arsenicoxydans, this protein is Aspartyl/glutamyl-tRNA(Asn/Gln) amidotransferase subunit B.